Reading from the N-terminus, the 294-residue chain is Energy-coupling factor transporter ATP-binding protein EcfA1 (294 aa).

In terms of domain architecture, ABC transporter spans 27 to 260 (IEFENVYFAY…EERLLKMQLD (234 aa)). 60-67 (GHNGSGKS) is a binding site for ATP.

This sequence belongs to the ABC transporter superfamily. Energy-coupling factor EcfA family. As to quaternary structure, forms a stable energy-coupling factor (ECF) transporter complex composed of 2 membrane-embedded substrate-binding proteins (S component), 2 ATP-binding proteins (A component) and 2 transmembrane proteins (T component).

It localises to the cell membrane. Functionally, ATP-binding (A) component of a common energy-coupling factor (ECF) ABC-transporter complex. Unlike classic ABC transporters this ECF transporter provides the energy necessary to transport a number of different substrates. The protein is Energy-coupling factor transporter ATP-binding protein EcfA1 of Ureaplasma parvum serovar 3 (strain ATCC 700970).